A 160-amino-acid chain; its full sequence is Lymphocyte antigen 96 (160 aa).

Residues 1 to 18 form the signal peptide; sequence MLPFLFFSTLFSSIFTEA. 3 cysteine pairs are disulfide-bonded: cysteine 25–cysteine 51, cysteine 37–cysteine 148, and cysteine 95–cysteine 105. Asparagine 26 is a glycosylation site (N-linked (GlcNAc...) asparagine). N-linked (GlcNAc...) asparagine glycosylation occurs at asparagine 114. Residues 119–123 form an interaction with lipopolysaccharide region; sequence FSFKG.

Heterogeneous homomer formed from homodimers; disulfide-linked. Belongs to the lipopolysaccharide (LPS) receptor, a multi-protein complex containing at least CD14, LY96 and TLR4. Binds to the extracellular domains of TLR2 and TLR4. Ligand binding induces interaction with TLR4 and oligomerization of the complex. N-glycosylated; high-mannose.

The protein localises to the secreted. It is found in the extracellular space. Functionally, binds bacterial lipopolysaccharide (LPS). Cooperates with TLR4 in the innate immune response to bacterial lipopolysaccharide (LPS), and with TLR2 in the response to cell wall components from Gram-positive and Gram-negative bacteria. Enhances TLR4-dependent activation of NF-kappa-B. Cells expressing both LY96 and TLR4, but not TLR4 alone, respond to LPS. In Homo sapiens (Human), this protein is Lymphocyte antigen 96 (LY96).